A 407-amino-acid chain; its full sequence is Probable tRNA pseudouridine synthase D (407 aa).

Asp81 serves as the catalytic Nucleophile. Positions 151–372 constitute a TRUD domain; the sequence is GFPNYFGIQR…PGGRRELLIR (222 aa).

It belongs to the pseudouridine synthase TruD family.

It catalyses the reaction uridine(13) in tRNA = pseudouridine(13) in tRNA. In terms of biological role, could be responsible for synthesis of pseudouridine from uracil-13 in transfer RNAs. The protein is Probable tRNA pseudouridine synthase D of Pyrococcus furiosus (strain ATCC 43587 / DSM 3638 / JCM 8422 / Vc1).